The sequence spans 646 residues: FAD-binding monooxygenase prhK (646 aa).

N46 is a glycosylation site (N-linked (GlcNAc...) asparagine). A helical membrane pass occupies residues 80-97 (IIIIGAGFGGLLFAVRLI). FAD-binding positions include 119–122 (TWYW), 131–132 (DT), and Y137. Position 129–131 (129–131 (MCD)) interacts with NADP(+). NADP(+)-binding positions include 275–281 (TGATAIQ) and 298–299 (RT). N-linked (GlcNAc...) asparagine glycans are attached at residues N429, N483, and N529.

It belongs to the FAD-binding monooxygenase family. FAD serves as cofactor.

It localises to the membrane. The enzyme catalyses preaustinoid A + AH2 + O2 = preaustinoid A1 + A + H2O. Its pathway is secondary metabolite biosynthesis; terpenoid biosynthesis. Functionally, FAD-binding monooxygenase; part of the gene cluster that mediates the biosynthesis of paraherquonin, a meroterpenoid with a unique, highly congested hexacyclic molecular architecture. The first step of the pathway is the synthesis of 3,5-dimethylorsellinic acid (DMOA) by the polyketide synthase prhL. Synthesis of DMOA is followed by farnesylation by the prenyltransferase prhE, methylesterification by the methyl-transferase prhM, epoxidation of the prenyl chain by the flavin-dependent monooxygenase prhF, and cyclization of the farnesyl moiety by the terpene cyclase prhH, to yield the tetracyclic intermediate, protoaustinoid A. The short chain dehydrogenase prhI then oxidizes the C-3 alcohol group of the terpene cyclase product to transform protoaustinoid A into protoaustinoid B. The FAD-binding monooxygenase prhJ catalyzes the oxidation of protoaustinoid B into preaustinoid A which is further oxidized into preaustinoid A1 by FAD-binding monooxygenase phrK. Finally, prhA leads to berkeleydione via the berkeleyone B intermediate. PrhA is a multifunctional dioxygenase that first desaturates at C5-C6 to form berkeleyone B, followed by rearrangement of the A/B-ring to form the cycloheptadiene moiety in berkeleydione. Berkeleydione serves as the key intermediate for the biosynthesis of paraherquonin as well as many other meroterpenoids. The cytochrome P450 monooxygenases prhB, prhD, and prhN, as well as the isomerase prhC, are probably involved in the late stage of paraherquonin biosynthesis, after the production of berkeleydione. Especially prhC might be a multifunctional enzyme that catalyzes the D-ring expansion via intramolecular methoxy rearrangement, as well as the hydrolysis of the expanded D-ring. This is FAD-binding monooxygenase prhK from Penicillium brasilianum.